Reading from the N-terminus, the 461-residue chain is uncharacterized protein (461 aa).

2 disordered regions span residues 254–273 (NNNN…NNNN) and 368–414 (QPSQ…NNNS). Residues 381 to 413 (NNNNNNNNNNNNNNNNNNNNNNNNNNNNNNNNN) show a composition bias toward low complexity.

This is an uncharacterized protein from Dictyostelium discoideum (Social amoeba).